A 397-amino-acid polypeptide reads, in one-letter code: Protochlorophyllide reductase, chloroplastic (397 aa).

Residues 1–57 (MALTMSAKSVSARAQVSSKAQAAPAVAVSGRTSSRVMPAPALAARSSVARTPLVVCA) constitute a chloroplast transit peptide.

Belongs to the short-chain dehydrogenases/reductases (SDR) family. POR subfamily.

It localises to the plastid. The protein resides in the chloroplast. The catalysed reaction is chlorophyllide a + NADP(+) = protochlorophyllide a + NADPH + H(+). It participates in porphyrin-containing compound metabolism; chlorophyll biosynthesis. In terms of biological role, phototransformation of protochlorophyllide (Pchlide) to chlorophyllide (Chlide). In Chlamydomonas reinhardtii (Chlamydomonas smithii), this protein is Protochlorophyllide reductase, chloroplastic (PORA).